The sequence spans 434 residues: UDP-N-acetylglucosamine 1-carboxyvinyltransferase (434 aa).

Position 22-23 (22-23 (KN)) interacts with phosphoenolpyruvate. R99 provides a ligand contact to UDP-N-acetyl-alpha-D-glucosamine. Residue C123 is the Proton donor of the active site. 2-(S-cysteinyl)pyruvic acid O-phosphothioketal is present on C123. Residues 128-132 (RPVDQ), D317, and I339 contribute to the UDP-N-acetyl-alpha-D-glucosamine site.

It belongs to the EPSP synthase family. MurA subfamily.

Its subcellular location is the cytoplasm. The catalysed reaction is phosphoenolpyruvate + UDP-N-acetyl-alpha-D-glucosamine = UDP-N-acetyl-3-O-(1-carboxyvinyl)-alpha-D-glucosamine + phosphate. The protein operates within cell wall biogenesis; peptidoglycan biosynthesis. Functionally, cell wall formation. Adds enolpyruvyl to UDP-N-acetylglucosamine. The protein is UDP-N-acetylglucosamine 1-carboxyvinyltransferase of Paracidovorax citrulli (strain AAC00-1) (Acidovorax citrulli).